Consider the following 389-residue polypeptide: Glutamate 5-kinase (389 aa).

Lys26 serves as a coordination point for ATP. 3 residues coordinate substrate: Ser66, Asp153, and Asn167. 187-188 (TD) lines the ATP pocket. In terms of domain architecture, PUA spans 293 to 371 (AGTLFLDQGA…EQIEWILGHR (79 aa)).

Belongs to the glutamate 5-kinase family.

It localises to the cytoplasm. It carries out the reaction L-glutamate + ATP = L-glutamyl 5-phosphate + ADP. The protein operates within amino-acid biosynthesis; L-proline biosynthesis; L-glutamate 5-semialdehyde from L-glutamate: step 1/2. Its function is as follows. Catalyzes the transfer of a phosphate group to glutamate to form L-glutamate 5-phosphate. This Rhodopirellula baltica (strain DSM 10527 / NCIMB 13988 / SH1) protein is Glutamate 5-kinase.